Consider the following 596-residue polypeptide: Thioredoxin reductase 1, mitochondrial (596 aa).

Positions 59-87 are disordered; the sequence is LTGQRGSRDSTGATGGNAPAGSGAGAPPP. Residues 68-79 show a composition bias toward low complexity; sequence STGATGGNAPAG. FAD is bound by residues 120 to 126, 143 to 147, 159 to 170, 233 to 235, 262 to 266, Ser-282, Phe-286, and Tyr-302; these read IGGGSAG, LDFVK, GGTCVNVGCIPK, GLG, and AVGGR. Cys-162 and Cys-167 are disulfide-bonded. NADP(+)-binding positions include 322-328 and Pro-355; that span reads VRSIVLR. FAD contacts are provided by residues 392 to 399, 429 to 432, 438 to 443, and Phe-472; these read RKGLVDDL, VGDI, and ELTPVA. Catalysis depends on His-569, which acts as the Proton acceptor. Position 570 (Pro-570) interacts with FAD. A disulfide bond links Cys-594 and Cys-595.

It belongs to the class-I pyridine nucleotide-disulfide oxidoreductase family. Homodimer. It depends on FAD as a cofactor. As to expression, during embryogenesis, expression is seen in germ cell progenitors, developing midgut, hindgut and proventriculus.

The protein localises to the mitochondrion. It is found in the cytoplasm. It catalyses the reaction [thioredoxin]-dithiol + NADP(+) = [thioredoxin]-disulfide + NADPH + H(+). Thioredoxin system is a major player in glutathione metabolism, due to the demonstrated absence of a glutathione reductase. Functionally interacts with the Sod/Cat reactive oxidation species (ROS) defense system and thereby has a role in preadult development and life span. Lack of a glutathione reductase suggests antioxidant defense in Drosophila, and probably in related insects, differs fundamentally from that in other organisms. The chain is Thioredoxin reductase 1, mitochondrial from Drosophila melanogaster (Fruit fly).